A 309-amino-acid chain; its full sequence is tRNA pseudouridine synthase B (309 aa).

The active-site Nucleophile is the Asp-39.

It belongs to the pseudouridine synthase TruB family. Type 1 subfamily.

It catalyses the reaction uridine(55) in tRNA = pseudouridine(55) in tRNA. In terms of biological role, responsible for synthesis of pseudouridine from uracil-55 in the psi GC loop of transfer RNAs. The polypeptide is tRNA pseudouridine synthase B (Bacillus velezensis (strain DSM 23117 / BGSC 10A6 / LMG 26770 / FZB42) (Bacillus amyloliquefaciens subsp. plantarum)).